Consider the following 512-residue polypeptide: Glycerol kinase, glycosomal (512 aa).

Residue Thr-11 participates in substrate binding. ATP is bound at residue Arg-15. Residues Arg-84, Tyr-139, and Asp-254 each contribute to the substrate site. Residues Thr-276, Gly-321, and 422-426 (GLSKN) each bind ATP. The short motif at 510-512 (AKL) is the Microbody targeting signal element.

This sequence belongs to the FGGY kinase family.

The protein resides in the glycosome. The catalysed reaction is glycerol + ATP = sn-glycerol 3-phosphate + ADP + H(+). Its pathway is polyol metabolism; glycerol degradation via glycerol kinase pathway; sn-glycerol 3-phosphate from glycerol: step 1/1. Functionally, catalyzes the phosphorylation of glycerol using ATP. Under anoxic conditions, when glycerol 3-phosphate accumulates in the glycosome, it catalyzes the reverse reaction, maintaining the ATP balance. Key enzyme for the survival of bloodstream forms under anoxic conditions. The polypeptide is Glycerol kinase, glycosomal (GK) (Trypanosoma brucei brucei).